Reading from the N-terminus, the 443-residue chain is MSEMTPREIVSELDSYIIGQHKAKRAVSIALRNRWRRMQLDEALRHEVTPKNILMIGPTGVGKTEIARRLAKLANAPFIKVEATKFTEVGYVGKEVDSIIRDLTDSAIKMVRHQSIEKNRFRAEEMAEDRILDVLIPPAKNNWGQAEGTQEPSATRQAFRKKLREGQLDDKEIEIDLAASPVGVEIMAPPGMEEMTNQLQSMFQNLAGQKQKAHKVKIKDAFKLLIEEEAAKLVNPEELKQQAIEAVEQHGIVFIDEIDKICKRGESSGPDVSREGVQRDLLPLVEGCTVSTKHGMVKTDHILFIASGAFQVASPSDLIPELQGRLPIRVELQALTTEDFERILTEPSASLTEQYKALMATEGVDISFTADGIRRIAEAAWQVNESTENIGARRLHTVMERLIEDVSYDASEMNGQSVIIDADYVRSHLDELVADEDLSRFIL.

Residues isoleucine 18, 60–65, aspartate 256, glutamate 321, and arginine 393 contribute to the ATP site; that span reads GVGKTE.

This sequence belongs to the ClpX chaperone family. HslU subfamily. As to quaternary structure, a double ring-shaped homohexamer of HslV is capped on each side by a ring-shaped HslU homohexamer. The assembly of the HslU/HslV complex is dependent on binding of ATP.

It is found in the cytoplasm. In terms of biological role, ATPase subunit of a proteasome-like degradation complex; this subunit has chaperone activity. The binding of ATP and its subsequent hydrolysis by HslU are essential for unfolding of protein substrates subsequently hydrolyzed by HslV. HslU recognizes the N-terminal part of its protein substrates and unfolds these before they are guided to HslV for hydrolysis. The chain is ATP-dependent protease ATPase subunit HslU from Pectobacterium atrosepticum (strain SCRI 1043 / ATCC BAA-672) (Erwinia carotovora subsp. atroseptica).